Reading from the N-terminus, the 286-residue chain is Ribosomal RNA small subunit methyltransferase I (286 aa).

This sequence belongs to the methyltransferase superfamily. RsmI family.

It localises to the cytoplasm. It catalyses the reaction cytidine(1402) in 16S rRNA + S-adenosyl-L-methionine = 2'-O-methylcytidine(1402) in 16S rRNA + S-adenosyl-L-homocysteine + H(+). Functionally, catalyzes the 2'-O-methylation of the ribose of cytidine 1402 (C1402) in 16S rRNA. The polypeptide is Ribosomal RNA small subunit methyltransferase I (Escherichia coli O157:H7).